The following is a 187-amino-acid chain: Dihydrofolate reductase type A10 (187 aa).

The 173-residue stretch at 2-174 (NISLIFANEL…YSLSIDKFVR (173 aa)) folds into the DHFR domain.

It belongs to the dihydrofolate reductase family. Homodimer.

It catalyses the reaction (6S)-5,6,7,8-tetrahydrofolate + NADP(+) = 7,8-dihydrofolate + NADPH + H(+). It participates in cofactor biosynthesis; tetrahydrofolate biosynthesis; 5,6,7,8-tetrahydrofolate from 7,8-dihydrofolate: step 1/1. In terms of biological role, key enzyme in folate metabolism. Catalyzes an essential reaction for de novo glycine and purine synthesis, and for DNA precursor synthesis. This Escherichia coli protein is Dihydrofolate reductase type A10 (dfrA10).